The chain runs to 391 residues: uncharacterized protein (391 aa).

This is an uncharacterized protein from Methanocaldococcus jannaschii (strain ATCC 43067 / DSM 2661 / JAL-1 / JCM 10045 / NBRC 100440) (Methanococcus jannaschii).